The chain runs to 131 residues: Small ribosomal subunit protein uS8 (131 aa).

It belongs to the universal ribosomal protein uS8 family. In terms of assembly, part of the 30S ribosomal subunit. Contacts proteins S5 and S12.

One of the primary rRNA binding proteins, it binds directly to 16S rRNA central domain where it helps coordinate assembly of the platform of the 30S subunit. The polypeptide is Small ribosomal subunit protein uS8 (Bacteroides fragilis (strain ATCC 25285 / DSM 2151 / CCUG 4856 / JCM 11019 / LMG 10263 / NCTC 9343 / Onslow / VPI 2553 / EN-2)).